Here is a 104-residue protein sequence, read N- to C-terminus: MERVAKLSTEKAVVIFTASNCPMCHTVVSLFSDLGVGAAVHELDRDPLHGRDMERDLARRLGRSPPVPAVFIAGKLVGSTDRVMSLHLAGKLVPMLKAAGAIWL.

Residues 1–103 form the Glutaredoxin domain; the sequence is MERVAKLSTE…PMLKAAGAIW (103 aa). Cys-21 and Cys-24 are disulfide-bonded.

The protein belongs to the glutaredoxin family. CC-type subfamily.

It localises to the cytoplasm. Has a glutathione-disulfide oxidoreductase activity in the presence of NADPH and glutathione reductase. Reduces low molecular weight disulfides and proteins. The sequence is that of Glutaredoxin-C15 (GRXC15) from Oryza sativa subsp. japonica (Rice).